Reading from the N-terminus, the 132-residue chain is Large ribosomal subunit protein uL14 (132 aa).

This sequence belongs to the universal ribosomal protein uL14 family. In terms of assembly, part of the 50S ribosomal subunit. Forms a cluster with proteins L3 and L24e, part of which may contact the 16S rRNA in 2 intersubunit bridges.

In terms of biological role, binds to 23S rRNA. Forms part of two intersubunit bridges in the 70S ribosome. The polypeptide is Large ribosomal subunit protein uL14 (Archaeoglobus fulgidus (strain ATCC 49558 / DSM 4304 / JCM 9628 / NBRC 100126 / VC-16)).